Here is a 339-residue protein sequence, read N- to C-terminus: Very-long-chain 3-oxoacyl-CoA reductase (339 aa).

A helical membrane pass occupies residues Val19–Cys39. Leu64, Lys105, Asp119, Asp127, Asn146, Tyr213, Lys217, Val246, and Ser248 together coordinate NADP(+). The active-site Proton donor is Tyr213. Catalysis depends on Lys217, which acts as the Lowers pKa of active site Tyr.

This sequence belongs to the short-chain dehydrogenases/reductases (SDR) family.

The protein resides in the endoplasmic reticulum membrane. It carries out the reaction a very-long-chain (3R)-3-hydroxyacyl-CoA + NADP(+) = a very-long-chain 3-oxoacyl-CoA + NADPH + H(+). It functions in the pathway lipid metabolism; fatty acid biosynthesis. Functionally, component of the microsomal membrane bound fatty acid elongation system, which produces the 26-carbon very long-chain fatty acids (VLCFA) from palmitate. Catalyzes the reduction of the 3-ketoacyl-CoA intermediate that is formed in each cycle of fatty acid elongation. VLCFAs serve as precursors for ceramide and sphingolipids. The sequence is that of Very-long-chain 3-oxoacyl-CoA reductase from Ajellomyces capsulatus (strain NAm1 / WU24) (Darling's disease fungus).